The chain runs to 410 residues: Protein king tubby 2 (410 aa).

The span at 48 to 72 (SPNNPDQILTSTGNASITTTPTSPY) shows a compositional bias: polar residues. Disordered regions lie at residues 48–109 (SPNN…STRH) and 121–159 (ISPALMNNNGGSHHDSSSGKSVEHSSPQASGHNDTEGDV). Residues 132–143 (SHHDSSSGKSVE) show a composition bias toward basic and acidic residues.

This sequence belongs to the TUB family.

The protein localises to the cytoplasm. The protein resides in the nucleus. In Aedes aegypti (Yellowfever mosquito), this protein is Protein king tubby 2 (king-tubby2).